Consider the following 126-residue polypeptide: Large ribosomal subunit protein bL12 (126 aa).

This sequence belongs to the bacterial ribosomal protein bL12 family. Homodimer. Part of the ribosomal stalk of the 50S ribosomal subunit. Forms a multimeric L10(L12)X complex, where L10 forms an elongated spine to which 2 to 4 L12 dimers bind in a sequential fashion. Binds GTP-bound translation factors.

Forms part of the ribosomal stalk which helps the ribosome interact with GTP-bound translation factors. Is thus essential for accurate translation. This chain is Large ribosomal subunit protein bL12, found in Teredinibacter turnerae (strain ATCC 39867 / T7901).